Reading from the N-terminus, the 367-residue chain is tRNA/tmRNA (uracil-C(5))-methyltransferase (367 aa).

Residues glutamine 182, tyrosine 210, asparagine 215, glutamate 231, and aspartate 293 each contribute to the S-adenosyl-L-methionine site. The active-site Nucleophile is the cysteine 318. Residue glutamate 352 is the Proton acceptor of the active site.

This sequence belongs to the class I-like SAM-binding methyltransferase superfamily. RNA M5U methyltransferase family. TrmA subfamily.

The enzyme catalyses uridine(54) in tRNA + S-adenosyl-L-methionine = 5-methyluridine(54) in tRNA + S-adenosyl-L-homocysteine + H(+). It carries out the reaction uridine(341) in tmRNA + S-adenosyl-L-methionine = 5-methyluridine(341) in tmRNA + S-adenosyl-L-homocysteine + H(+). In terms of biological role, dual-specificity methyltransferase that catalyzes the formation of 5-methyluridine at position 54 (m5U54) in all tRNAs, and that of position 341 (m5U341) in tmRNA (transfer-mRNA). This is tRNA/tmRNA (uracil-C(5))-methyltransferase from Neisseria meningitidis serogroup C (strain 053442).